The following is a 207-amino-acid chain: Large ribosomal subunit protein uL3c (207 aa).

Positions 129–148 (TRGPMTHGSKNHRAPGSIGM) are disordered.

It belongs to the universal ribosomal protein uL3 family. Part of the 50S ribosomal subunit.

It is found in the plastid. It localises to the chloroplast. Functionally, one of the primary rRNA binding proteins, it binds directly near the 3'-end of the 23S rRNA, where it nucleates assembly of the 50S subunit. This chain is Large ribosomal subunit protein uL3c (rpl3), found in Phaeodactylum tricornutum (strain CCAP 1055/1).